The chain runs to 366 residues: N-acetyl-6-hydroxytryptophan oxidase ivoB (366 aa).

The first 18 residues, 1 to 18 (MHLLSSLAALAAAITVAF), serve as a signal peptide directing secretion. Asn-28 and Asn-81 each carry an N-linked (GlcNAc...) asparagine glycan. 2 residues coordinate Cu cation: His-87 and His-96. 2 N-linked (GlcNAc...) asparagine glycosylation sites follow: Asn-114 and Asn-121. His-291 is a binding site for Cu cation. Asn-319 is a glycosylation site (N-linked (GlcNAc...) asparagine).

It belongs to the tyrosinase family. The cofactor is Cu(2+).

It functions in the pathway pigment biosynthesis. Its activity is regulated as follows. Activity is inhibited by 2,3-dihydroxynaphthalene, phenylhydrazine, diethyl dithiocarbamate and 8-hydroxyquinolene. Nonribosomal peptide synthetase; part of the pathway that mediates the biosynthesis of the gray-brown conidiophore pigment. The first step of the pathway is performed by the nonribosomal peptide synthetase ivoA that catalyzes ATP-dependent unidirectional stereoinversion of L-tryptophan to D-tryptophan with complete conversion. While the stereoinversion is catalyzed by the epimerization (E) domain of ivoA, the terminal condensation (C) domain stereoselectively hydrolyzes D-tryptophanyl-S-phosphopantetheine thioester and thus represents a non-canonical C domain function. D-tryptophan is acetylated, probably by an endogenous acetyltransferase. N-acetyltryptophan is further 6-hydroxylated into N-acetyl-6-hydroxytryptophan (AHT) by the cytochrome P450 monooxygenase ivoC. N-acetyl-6-hydroxytryptophan is substrate of the N-acetyl-6-hydroxytryptophan oxidase ivoB to produce the gray-brown conidiophore pigment. The protein is N-acetyl-6-hydroxytryptophan oxidase ivoB of Emericella nidulans (strain FGSC A4 / ATCC 38163 / CBS 112.46 / NRRL 194 / M139) (Aspergillus nidulans).